The following is a 184-amino-acid chain: UPF0179 protein Pcal_2106 (184 aa).

The span at 146-161 (GASSAGISQAPSRVPL) shows a compositional bias: low complexity. Residues 146–184 (GASSAGISQAPSRVPLSKPPSKSPSPQKSSPRGPTSRLP) form a disordered region.

This sequence belongs to the UPF0179 family.

The polypeptide is UPF0179 protein Pcal_2106 (Pyrobaculum calidifontis (strain DSM 21063 / JCM 11548 / VA1)).